The sequence spans 318 residues: Ribosomal RNA small subunit methyltransferase H (318 aa).

S-adenosyl-L-methionine contacts are provided by residues 35–37 (AGH), Asp55, Phe84, Asp105, and Gln112. Residues 294-318 (SDSELSENNRSRSAKLRIAEKIKSR) form a disordered region.

The protein belongs to the methyltransferase superfamily. RsmH family.

It is found in the cytoplasm. It carries out the reaction cytidine(1402) in 16S rRNA + S-adenosyl-L-methionine = N(4)-methylcytidine(1402) in 16S rRNA + S-adenosyl-L-homocysteine + H(+). In terms of biological role, specifically methylates the N4 position of cytidine in position 1402 (C1402) of 16S rRNA. The sequence is that of Ribosomal RNA small subunit methyltransferase H from Enterococcus faecalis (strain ATCC 700802 / V583).